The following is a 243-amino-acid chain: Putative outer membrane protein RP075 (243 aa).

The first 23 residues, 1–23 (MLRIVKKLWVILFISNISINSFA), serve as a signal peptide directing secretion.

It belongs to the OmpW/AlkL family.

The protein localises to the cell outer membrane. The polypeptide is Putative outer membrane protein RP075 (Rickettsia prowazekii (strain Madrid E)).